Consider the following 347-residue polypeptide: Microtubule-associated protein Jupiter (347 aa).

Over residues 1-14 the composition is skewed to polar residues; sequence MISNFDCTDNQASS. The tract at residues 1-33 is disordered; it reads MISNFDCTDNQASSKVLRPPGGGSSDIFGSEMP. Ser-24 is subject to Phosphoserine. A phosphothreonine mark is found at Thr-35 and Thr-96. A phosphoserine mark is found at Ser-105, Ser-134, and Ser-145. Disordered regions lie at residues 127 to 193 and 303 to 347; these read HYNG…PTPP and GNPV…SGLW. Residues 132 to 145 are compositionally biased toward low complexity; it reads SGSVSSASSSVSSS. The segment covering 146–164 has biased composition (polar residues); sequence TENLKMNSGSRSVFRNMST. Residues 181–193 are compositionally biased toward pro residues; sequence PPSPVPIEVPTPP.

Belongs to the MAP Jupiter family.

The protein resides in the nucleus. Its subcellular location is the cytoplasm. It is found in the cytoskeleton. It localises to the spindle. Binds to all microtubule populations. The polypeptide is Microtubule-associated protein Jupiter (Drosophila yakuba (Fruit fly)).